The following is a 250-amino-acid chain: 5-oxoprolinase subunit A (250 aa).

Belongs to the LamB/PxpA family. Forms a complex composed of PxpA, PxpB and PxpC.

The enzyme catalyses 5-oxo-L-proline + ATP + 2 H2O = L-glutamate + ADP + phosphate + H(+). Its function is as follows. Catalyzes the cleavage of 5-oxoproline to form L-glutamate coupled to the hydrolysis of ATP to ADP and inorganic phosphate. This chain is 5-oxoprolinase subunit A, found in Chromohalobacter salexigens (strain ATCC BAA-138 / DSM 3043 / CIP 106854 / NCIMB 13768 / 1H11).